Consider the following 375-residue polypeptide: Alcohol dehydrogenase 1A (375 aa).

At S2 the chain carries N-acetylserine. Residue S23 is modified to Phosphoserine. Position 47 (C47) interacts with Zn(2+). NAD(+) is bound at residue 48–52 (GTDDH). The Zn(2+) site is built by H68, C98, C101, C104, C112, and C175. NAD(+) contacts are provided by residues 200 to 205 (GLGGVG), D224, K229, I270, 293 to 295 (VGV), 318 to 320 (AIL), and R370.

It belongs to the zinc-containing alcohol dehydrogenase family. In terms of assembly, dimer of identical or heterodimer of closely related subunits alpha, beta, or gamma that are encoded by genes ADH1A, ADH1B, and ADH1C, respectively. Zn(2+) is required as a cofactor.

Its subcellular location is the cytoplasm. The enzyme catalyses a primary alcohol + NAD(+) = an aldehyde + NADH + H(+). It catalyses the reaction a secondary alcohol + NAD(+) = a ketone + NADH + H(+). The catalysed reaction is butan-1-ol + NAD(+) = butanal + NADH + H(+). It carries out the reaction 1-propanol + NAD(+) = propanal + NADH + H(+). Its function is as follows. Alcohol dehydrogenase. Oxidizes primary as well as secondary alcohols. Ethanol is a very poor substrate. The chain is Alcohol dehydrogenase 1A (ADH1A) from Homo sapiens (Human).